We begin with the raw amino-acid sequence, 3081 residues long: Cilia- and flagella-associated protein 54 (3081 aa).

Disordered regions lie at residues 542 to 579, 591 to 626, 910 to 942, 1406 to 1451, 1518 to 1586, 1636 to 1657, 2176 to 2210, 2229 to 2306, and 2776 to 2806; these read SGTA…AGGA, TQTA…QSSL, PPQP…GARK, ADAP…GITP, ESIL…YPVV, RRAA…EERP, GERT…LPEP, MASG…SQRA, and ARPV…SGDG. Residues 564 to 579 show a composition bias toward low complexity; that stretch reads GGSASPPNGSSGAGGA. Residues 1428–1449 show a composition bias toward pro residues; sequence MPPPVPDPSAAGPPPLTPPEGI. A compositionally biased stretch (basic and acidic residues) spans 1538–1550; the sequence is GGKDDKKKDDKAP. 3 stretches are compositionally biased toward low complexity: residues 1638 to 1648, 2181 to 2199, and 2240 to 2269; these read AALAASASTAG, APKP…AAAA, and EPSS…SPTG. Over residues 2289–2301 the composition is skewed to pro residues; the sequence is PEVPGPPPPPPPS. Over residues 2776–2788 the composition is skewed to low complexity; that stretch reads ARPVATSSSGARP. Positions 2796–2805 are enriched in gly residues; the sequence is KPGAGGGSGD.

This sequence belongs to the CFAP54 family. In terms of assembly, part of the PDCP1 complex composed of CFAP46, CFAP54, CFAP74 and CFAP221; the PDCP1 complex binds calmodulin.

The protein localises to the cytoplasm. Its subcellular location is the cytoskeleton. It is found in the cilium axoneme. This is Cilia- and flagella-associated protein 54 from Chlamydomonas reinhardtii (Chlamydomonas smithii).